Consider the following 489-residue polypeptide: Para-nitrobenzyl esterase (489 aa).

Catalysis depends on Ser189, which acts as the Acyl-ester intermediate. The residue at position 189 (Ser189) is a Phosphoserine. Catalysis depends on charge relay system residues Glu310 and His399.

Belongs to the type-B carboxylesterase/lipase family. In terms of assembly, monomer.

Its function is as follows. Catalyzes hydrolysis of several beta-lactam antibiotic PNB esters to the corresponding free acid and PNB alcohol. The chain is Para-nitrobenzyl esterase (pnbA) from Bacillus subtilis (strain 168).